Reading from the N-terminus, the 392-residue chain is Galactose-1-phosphate uridylyltransferase (392 aa).

Zn(2+)-binding residues include Cys52 and Cys55. UDP-alpha-D-glucose-binding positions include Ala61 and 77 to 78; that span reads ND. His126 contacts Zn(2+). Asn194 serves as a coordination point for UDP-alpha-D-glucose. His205 provides a ligand contact to Zn(2+). The active-site Tele-UMP-histidine intermediate is His207. Gln209 provides a ligand contact to UDP-alpha-D-glucose. Fe cation-binding residues include Glu223, His323, His340, and His342. Residues 355-358 and 360-361 contribute to the UDP-alpha-D-glucose site; these read KFLV and YE.

Belongs to the galactose-1-phosphate uridylyltransferase type 1 family. As to quaternary structure, homodimer. Zn(2+) is required as a cofactor.

The enzyme catalyses alpha-D-galactose 1-phosphate + UDP-alpha-D-glucose = alpha-D-glucose 1-phosphate + UDP-alpha-D-galactose. Its pathway is carbohydrate metabolism; galactose metabolism. The sequence is that of Galactose-1-phosphate uridylyltransferase (gal-7) from Neurospora crassa (strain ATCC 24698 / 74-OR23-1A / CBS 708.71 / DSM 1257 / FGSC 987).